The following is a 338-amino-acid chain: uncharacterized protein (338 aa).

This is an uncharacterized protein from Acidianus filamentous virus 2 (isolate Italy/Pozzuoli) (AFV-2).